We begin with the raw amino-acid sequence, 206 residues long: MTDTPTKQENQSKTENPPSSNANEQRRGNRNNDRKRNRRGDSKNERDSEWQERVVQIRRVSKTVKGGKKMSFRAIVVVGNEKGQVGVGVGKAGDVIGAVRKGVSDGKKHLVRVPLTPNNSIPTLSKGRDGAANVLIRPAAPGTGVIAGGSIRTVLELAGIKNVLAKRLGSKTPLNNARAAMVALSQLRTHKSASRERGISLEQLYS.

Residues 1 to 23 (MTDTPTKQENQSKTENPPSSNAN) are compositionally biased toward polar residues. The tract at residues 1-52 (MTDTPTKQENQSKTENPPSSNANEQRRGNRNNDRKRNRRGDSKNERDSEWQE) is disordered. Residues 24–52 (EQRRGNRNNDRKRNRRGDSKNERDSEWQE) show a composition bias toward basic and acidic residues. The region spanning 50–113 (WQERVVQIRR…SDGKKHLVRV (64 aa)) is the S5 DRBM domain.

It belongs to the universal ribosomal protein uS5 family. Part of the 30S ribosomal subunit. Contacts proteins S4 and S8.

In terms of biological role, with S4 and S12 plays an important role in translational accuracy. Its function is as follows. Located at the back of the 30S subunit body where it stabilizes the conformation of the head with respect to the body. The polypeptide is Small ribosomal subunit protein uS5 (Prochlorococcus marinus subsp. pastoris (strain CCMP1986 / NIES-2087 / MED4)).